The primary structure comprises 194 residues: Peptide deformylase (194 aa).

The interval 71 to 93 is disordered; the sequence is DAEPEECGHDHGDGEGAHKHYPV. A compositionally biased stretch (basic and acidic residues) spans 76–93; the sequence is ECGHDHGDGEGAHKHYPV. Fe cation is bound by residues C119 and H161. E162 is a catalytic residue. Position 165 (H165) interacts with Fe cation.

It belongs to the polypeptide deformylase family. Fe(2+) serves as cofactor.

It carries out the reaction N-terminal N-formyl-L-methionyl-[peptide] + H2O = N-terminal L-methionyl-[peptide] + formate. Removes the formyl group from the N-terminal Met of newly synthesized proteins. Requires at least a dipeptide for an efficient rate of reaction. N-terminal L-methionine is a prerequisite for activity but the enzyme has broad specificity at other positions. The protein is Peptide deformylase of Erythrobacter litoralis (strain HTCC2594).